We begin with the raw amino-acid sequence, 450 residues long: Putative receptor-like protein kinase At1g72540 (450 aa).

Phosphothreonine is present on Thr73. Positions 84–365 constitute a Protein kinase domain; that stretch reads FSKYNFLGEG…TVVKTLEPIL (282 aa). Residues 90–98 and Lys119 contribute to the ATP site; that span reads LGEGGFGEV. Tyr164 carries the phosphotyrosine modification. Residue Asp214 is the Proton acceptor of the active site. Ser218 is modified (phosphoserine). Thr254 carries the phosphothreonine modification. Tyr262 is modified (phosphotyrosine).

This sequence belongs to the protein kinase superfamily. Ser/Thr protein kinase family.

The catalysed reaction is L-seryl-[protein] + ATP = O-phospho-L-seryl-[protein] + ADP + H(+). It catalyses the reaction L-threonyl-[protein] + ATP = O-phospho-L-threonyl-[protein] + ADP + H(+). The polypeptide is Putative receptor-like protein kinase At1g72540 (Arabidopsis thaliana (Mouse-ear cress)).